The chain runs to 425 residues: Serine--tRNA ligase (425 aa).

L-serine is bound at residue 228–230 (TAE). 259–261 (RSE) lines the ATP pocket. E282 is an L-serine binding site. Residue 346–349 (EIAS) participates in ATP binding. An L-serine-binding site is contributed by S382.

The protein belongs to the class-II aminoacyl-tRNA synthetase family. Type-1 seryl-tRNA synthetase subfamily. Homodimer. The tRNA molecule binds across the dimer.

Its subcellular location is the cytoplasm. The catalysed reaction is tRNA(Ser) + L-serine + ATP = L-seryl-tRNA(Ser) + AMP + diphosphate + H(+). The enzyme catalyses tRNA(Sec) + L-serine + ATP = L-seryl-tRNA(Sec) + AMP + diphosphate + H(+). The protein operates within aminoacyl-tRNA biosynthesis; selenocysteinyl-tRNA(Sec) biosynthesis; L-seryl-tRNA(Sec) from L-serine and tRNA(Sec): step 1/1. Catalyzes the attachment of serine to tRNA(Ser). Is also able to aminoacylate tRNA(Sec) with serine, to form the misacylated tRNA L-seryl-tRNA(Sec), which will be further converted into selenocysteinyl-tRNA(Sec). This chain is Serine--tRNA ligase, found in Rickettsia prowazekii (strain Madrid E).